Reading from the N-terminus, the 626-residue chain is Interferon-induced GTP-binding protein MxC (626 aa).

The Dynamin-type G domain maps to 40-313 (DLNLPAIAVI…LVEHIAKNVP (274 aa)). The tract at residues 50–57 (GDQSSGKS) is G1 motif. GTP is bound at residue 50–57 (GDQSSGKS). The segment at 75–77 (VTR) is G2 motif. Positions 151–154 (DLPG) are G3 motif. GTP contacts are provided by residues 151 to 155 (DLPGI) and 220 to 223 (TKPD). The segment at 220-223 (TKPD) is G4 motif. A G5 motif region spans residues 252–255 (KCRG). Residues 534 to 624 (LRETAFHLTS…ALPKVVHSAN (91 aa)) enclose the GED domain.

It belongs to the TRAFAC class dynamin-like GTPase superfamily. Dynamin/Fzo/YdjA family.

The protein resides in the cytoplasm. The protein is Interferon-induced GTP-binding protein MxC (mxc) of Danio rerio (Zebrafish).